A 582-amino-acid polypeptide reads, in one-letter code: Frizzled-10 (582 aa).

The first 21 residues, 1–21 (MQHPGPRLWLVLQVMIGSCTA), serve as a signal peptide directing secretion. At 22–226 (ISSMDLERPG…DVYWSRDDKR (205 aa)) the chain is on the extracellular side. In terms of domain architecture, FZ spans 30–151 (PGDGKCQPVE…NDPNYLCMEA (122 aa)). 5 disulfides stabilise this stretch: Cys35–Cys96, Cys43–Cys89, Cys80–Cys118, Cys107–Cys148, and Cys111–Cys135. Asn49 carries an N-linked (GlcNAc...) asparagine glycan. Residues 153–189 (NNGSDEPSRGSGMFPPLFRPQRPHSAQEHPLKDGGPG) form a disordered region. Asn154 is a glycosylation site (N-linked (GlcNAc...) asparagine). The chain crosses the membrane as a helical span at residues 227-247 (FAVVWLAIWSVLCFFSSAFTV). Residues 248–263 (LTFLIDPSRFRYPERP) are Cytoplasmic-facing. The chain crosses the membrane as a helical span at residues 264-284 (IIFLSMCYCVYSVGYIIRLFA). Residues 285–312 (GAESIACDRDSGQLYVIQEGLESTGCTL) are Extracellular-facing. A helical membrane pass occupies residues 313–333 (VFLVLYYFGMASSLWWVVLTL). Residues 334–352 (TWFLAAGKKWGHEAIEANS) lie on the Cytoplasmic side of the membrane. The chain crosses the membrane as a helical span at residues 353-373 (SYFHLAAWAIPAVKTILILVM). Over 374–394 (RRVAGDELTGVCYVGSMDVNA) the chain is Extracellular. A helical membrane pass occupies residues 395 to 415 (LTGFVLVPLACYLVIGTSFIL). Topologically, residues 416 to 444 (SGFVALFHIRRVMKTGGENTDKLEKLMVR) are cytoplasmic. The chain crosses the membrane as a helical span at residues 445 to 465 (IGVFSLLYTVPATCVIACYFY). The Extracellular segment spans residues 466–503 (ERLNMDYWKMLATQHKCKMNNQTKTPDCLMTTSIPAVE). N-linked (GlcNAc...) asparagine glycosylation occurs at Asn486. A helical transmembrane segment spans residues 504-524 (VFMVKVSMLLVVGITSGVWVW). Residues 525-582 (TSKTLQSWQHVCSRGLKRKSRRKPASVVTSAGIYKKAQHPQKPHLGKYELPAQPSACV) lie on the Cytoplasmic side of the membrane. The short motif at 527-532 (KTLQSW) is the Lys-Thr-X-X-X-Trp motif, mediates interaction with the PDZ domain of Dvl family members element. Positions 561–582 (AQHPQKPHLGKYELPAQPSACV) are disordered. Positions 580-582 (ACV) match the PDZ-binding motif.

Belongs to the G-protein coupled receptor Fz/Smo family. In terms of assembly, interacts with MYOC. Interacts with WNT7B. In terms of processing, ubiquitinated by ZNRF3, leading to its degradation by the proteasome.

The protein localises to the cell membrane. Functionally, receptor for Wnt proteins. Functions in the canonical Wnt/beta-catenin signaling pathway. The canonical Wnt/beta-catenin signaling pathway leads to the activation of disheveled proteins, inhibition of GSK-3 kinase, nuclear accumulation of beta-catenin and activation of Wnt target genes. A second signaling pathway involving PKC and calcium fluxes has been seen for some family members, but it is not yet clear if it represents a distinct pathway or if it can be integrated in the canonical pathway, as PKC seems to be required for Wnt-mediated inactivation of GSK-3 kinase. Both pathways seem to involve interactions with G-proteins. May be involved in transduction and intercellular transmission of polarity information during tissue morphogenesis and/or in differentiated tissues. This is Frizzled-10 (Fzd10) from Mus musculus (Mouse).